Here is a 374-residue protein sequence, read N- to C-terminus: Chaperone protein DnaJ (374 aa).

The 65-residue stretch at 3–67 (DFYQILGVSR…ETRARYDQFG (65 aa)) folds into the J domain. Residues 99–118 (GQSSQGGRSQRRGPQQGDDL) are disordered. Residues 103–115 (QGGRSQRRGPQQG) are compositionally biased toward low complexity. Residues 132–214 (GQQREINIPH…CGGNGVKQVR (83 aa)) form a CR-type zinc finger. Residues Cys-145, Cys-148, Cys-162, Cys-165, Cys-188, Cys-191, Cys-202, and Cys-205 each coordinate Zn(2+). CXXCXGXG motif repeat units lie at residues 145–152 (CEVCRGTG), 162–169 (CTTCGGSG), 188–195 (CPTCNGVG), and 202–209 (CTSCGGNG).

The protein belongs to the DnaJ family. In terms of assembly, homodimer. The cofactor is Zn(2+).

The protein resides in the cytoplasm. Its function is as follows. Participates actively in the response to hyperosmotic and heat shock by preventing the aggregation of stress-denatured proteins and by disaggregating proteins, also in an autonomous, DnaK-independent fashion. Unfolded proteins bind initially to DnaJ; upon interaction with the DnaJ-bound protein, DnaK hydrolyzes its bound ATP, resulting in the formation of a stable complex. GrpE releases ADP from DnaK; ATP binding to DnaK triggers the release of the substrate protein, thus completing the reaction cycle. Several rounds of ATP-dependent interactions between DnaJ, DnaK and GrpE are required for fully efficient folding. Also involved, together with DnaK and GrpE, in the DNA replication of plasmids through activation of initiation proteins. This chain is Chaperone protein DnaJ, found in Prochlorococcus marinus subsp. pastoris (strain CCMP1986 / NIES-2087 / MED4).